Consider the following 133-residue polypeptide: Snaclec botrocetin subunit alpha (133 aa).

3 disulfides stabilise this stretch: Cys2–Cys13, Cys30–Cys128, and Cys103–Cys120. A C-type lectin domain is found at 9–129 (YEGNCYKFFQ…CAQKNPFVCK (121 aa)).

The protein belongs to the snaclec family. As to quaternary structure, heterodimer of subunits alpha and beta; disulfide-linked. Botrocetin and vWF form a soluble complex. Expressed by the venom gland.

It localises to the secreted. Snaclec that binds to von Willebrand factor (VWF) and induces its interaction with GPIbalpha (GP1BA) (via the vWF A1 domain), resulting in platelet aggregation. The polypeptide is Snaclec botrocetin subunit alpha (Bothrops jararaca (Jararaca)).